We begin with the raw amino-acid sequence, 136 residues long: Large-conductance mechanosensitive channel (136 aa).

Helical transmembrane passes span 10 to 30 (FAMR…AAFG) and 76 to 96 (GSFI…FSAV).

This sequence belongs to the MscL family. As to quaternary structure, homopentamer.

It is found in the cell inner membrane. Functionally, channel that opens in response to stretch forces in the membrane lipid bilayer. May participate in the regulation of osmotic pressure changes within the cell. This is Large-conductance mechanosensitive channel from Yersinia enterocolitica serotype O:8 / biotype 1B (strain NCTC 13174 / 8081).